We begin with the raw amino-acid sequence, 1017 residues long: Ubiquitin-like modifier-activating enzyme 1 (1017 aa).

A run of 2 repeats spans residues 26–163 and 419–571. Positions 26 to 571 are 2 approximate repeats; the sequence is SHETMKKITS…GTKGNTQVVV (546 aa). ATP-binding positions include alanine 438, aspartate 464, arginine 475, lysine 488, and 536 to 537; that span reads DN. Cysteine 592 (glycyl thioester intermediate) is an active-site residue. Polar residues predominate over residues 765 to 781; sequence IQTSENEPAPSSNTQQA. Residues 765 to 788 are disordered; that stretch reads IQTSENEPAPSSNTQQAGGDAEDD.

It belongs to the ubiquitin-activating E1 family. In terms of assembly, monomer.

The catalysed reaction is ATP + ubiquitin + [E1 ubiquitin-activating enzyme]-L-cysteine = AMP + diphosphate + S-ubiquitinyl-[E1 ubiquitin-activating enzyme]-L-cysteine.. Its pathway is protein modification; protein ubiquitination. Its function is as follows. Catalyzes the first step in ubiquitin conjugation to mark cellular proteins for degradation through the ubiquitin-proteasome system. Activates ubiquitin by first adenylating its C-terminal glycine residue with ATP, and thereafter linking this residue to the side chain of a cysteine residue in E1, yielding a ubiquitin-E1 thioester and free AMP. The protein is Ubiquitin-like modifier-activating enzyme 1 (uba1) of Dictyostelium discoideum (Social amoeba).